We begin with the raw amino-acid sequence, 132 residues long: Interleukin-5 (132 aa).

Residues 1-19 form the signal peptide; the sequence is MRMLLCLNVLTLSCVWAIA. N45, N74, and N88 each carry an N-linked (GlcNAc...) asparagine glycan.

It belongs to the IL-5 family. Homodimer; disulfide-linked. Interacts with IL5RA. Interacts with CSF2RB.

The protein resides in the secreted. Homodimeric cytokine expressed predominantly by T-lymphocytes and NK cells that plays an important role in the survival, differentiation, and chemotaxis of eosinophils. Acts also on activated and resting B-cells to induce immunoglobulin production, growth, and differentiation. Mechanistically, exerts its biological effects through a receptor composed of IL5RA subunit and the cytokine receptor common subunit beta/CSF2RB. Binding to the receptor leads to activation of various kinases including LYN, SYK and JAK2 and thereby propagates signals through the RAS-MAPK and JAK-STAT5 pathways respectively. The sequence is that of Interleukin-5 (Il5) from Rattus norvegicus (Rat).